The chain runs to 313 residues: Meiotically up-regulated gene 100 protein, mitochondrial (313 aa).

The next 2 membrane-spanning stretches (helical) occupy residues valine 147–glycine 167 and serine 178–phenylalanine 198.

The protein resides in the mitochondrion inner membrane. Functionally, has a role in meiosis. The chain is Meiotically up-regulated gene 100 protein, mitochondrial (mug100) from Schizosaccharomyces pombe (strain 972 / ATCC 24843) (Fission yeast).